The primary structure comprises 418 residues: Putative ion-transport protein YfeO (418 aa).

11 helical membrane passes run 9 to 31 (MLLLSLPAVAIGIASSLILIVVM), 55 to 77 (SPLWIIGVLTLTGIAVGLVIRFS), 90 to 112 (LIGAPVPPSALPGLIVALILGLA), 122 to 140 (PIMTVNIALAVAIGARLLP), 147 to 169 (WTILASAGTIGALFGTPVAAALI), 189 to 211 (PLMAAAAGALTTGLFFHPHFSLP), 223 to 244 (ILSGAIVAAIAIAAGMVAVWCL), 259 to 281 (LVLGIGGFILGILGVIGGPVSLF), 301 to 323 (YFLLAVIKLAALVVAAASGFRGG), 343 to 363 (VPAVPAAITVSCAILGIVLVV), and 376 to 398 (VVVPNTTLLPLLCIVMLPAWLLL).

It belongs to the chloride channel (TC 2.A.49) family.

It localises to the cell membrane. The chain is Putative ion-transport protein YfeO (yfeO) from Escherichia coli O157:H7.